Here is a 328-residue protein sequence, read N- to C-terminus: Pyruvate dehydrogenase E1 component subunit beta (328 aa).

E60 provides a ligand contact to thiamine diphosphate. Residues I113, I162, and N166 each contribute to the K(+) site.

Heterodimer of an alpha and a beta chain. Thiamine diphosphate is required as a cofactor.

Its subcellular location is the plastid. It localises to the chloroplast. The enzyme catalyses N(6)-[(R)-lipoyl]-L-lysyl-[protein] + pyruvate + H(+) = N(6)-[(R)-S(8)-acetyldihydrolipoyl]-L-lysyl-[protein] + CO2. Functionally, the pyruvate dehydrogenase complex catalyzes the overall conversion of pyruvate to acetyl-CoA and CO(2). It contains multiple copies of three enzymatic components: pyruvate dehydrogenase (E1), dihydrolipoamide acetyltransferase (E2) and lipoamide dehydrogenase (E3). The chain is Pyruvate dehydrogenase E1 component subunit beta (pdhB) from Staurastrum punctulatum (Green alga).